A 149-amino-acid chain; its full sequence is Large ribosomal subunit protein bL9 (149 aa).

An N6-acetyllysine modification is found at lysine 89.

The protein belongs to the bacterial ribosomal protein bL9 family.

Functionally, binds to the 23S rRNA. This chain is Large ribosomal subunit protein bL9, found in Shigella dysenteriae serotype 1 (strain Sd197).